We begin with the raw amino-acid sequence, 605 residues long: uncharacterized protein (605 aa).

The interval 111 to 151 (VNVNDGKPNDIELSSTSKTENDPPLSLHTTPDDLQGNGVNV) is disordered.

The protein resides in the golgi apparatus. This is an uncharacterized protein from Schizosaccharomyces pombe (strain 972 / ATCC 24843) (Fission yeast).